The primary structure comprises 265 residues: MKFTIMSKGDQSSDTLASTMKEYLLDFGFIMDEQEPDIVISVGGDGTLLYAFHRYYNRLDETAFVGVHTGHLGFYADWLPTEVEKLVIAIAKTPFQVVEYPLLEVIIRYMNGSKESQYLAMNEATVKSAEGTLVTEVEIRGEYFETFRGDGLCISTPSGSTAYNKALGGAIIHPSIEAIQIAEMASINNRVFRTVGSPLVLPKHHTCVLKPTAGMNLQITVDHLTMVHQDVKSIQYRVANEKVRFVRFRPFPFWKRVRDSFVADK.

The Proton acceptor role is filled by D45. NAD(+) is bound by residues 45–46 (DG), 122–123 (NE), R148, D150, and A185.

The protein belongs to the NAD kinase family. Requires a divalent metal cation as cofactor.

Its subcellular location is the cytoplasm. It carries out the reaction NAD(+) + ATP = ADP + NADP(+) + H(+). Its function is as follows. Involved in the regulation of the intracellular balance of NAD and NADP, and is a key enzyme in the biosynthesis of NADP. Catalyzes specifically the phosphorylation on 2'-hydroxyl of the adenosine moiety of NAD to yield NADP. The chain is NAD kinase 1 from Bacillus anthracis.